Here is a 507-residue protein sequence, read N- to C-terminus: Probable aldehyde dehydrogenase (507 aa).

219–225 (GFGAEAG) is a binding site for NAD(+). Residues Glu-263 and Cys-302 contribute to the active site.

It belongs to the aldehyde dehydrogenase family.

The catalysed reaction is an aldehyde + NAD(+) + H2O = a carboxylate + NADH + 2 H(+). The chain is Probable aldehyde dehydrogenase from Mycobacterium bovis (strain ATCC BAA-935 / AF2122/97).